The chain runs to 448 residues: Proline iminopeptidase aneH (448 aa).

Positions 64 to 191 (PWMLYLQGGP…VEVFIGGGPC (128 aa)) constitute an AB hydrolase-1 domain. The Nucleophile role is filled by Ser-164. Asp-397 is a catalytic residue. Catalysis depends on His-425, which acts as the Proton donor.

The protein belongs to the peptidase S33 family. Homooligomer.

It is found in the cytoplasm. It catalyses the reaction Release of N-terminal proline from a peptide.. It functions in the pathway secondary metabolite biosynthesis. Proline iminopeptidase; part of the gene cluster that mediates the biosynthesis of aculenes, a unique type of norsesquiterpenes that contain a nordaucane skeleton linked to an L-proline moiety and are of mixed biosynthetic origin. The pathway begins with the synthesis of dauca-4,7-diene by the terpene cyclase aneC using farnesyl pyrophosphate (FPP) as substrate. The cytochrome P450 monooxygenase aneF then performs the initial oxidation at C-12 of dauca-4,7-diene to yield asperaculane D. Asperaculane D is substrate of the cytochrome P450 monooxygenase aneD for C-10 hydroxylation to yield asperaculane E. The cytochrome P450 monooxygenase aneG then converts asperaculane E into aculene D via C-2 oxidation. The monomodular nonribosomal peptide synthtase aneB adenylates L-proline and the thiohydrolase aneE transfers this activated L-proline derivative to aculenes D and C to produce respectively aculenes B and A. The dioxygenase aneA converts aculene D into aculene C, and aculene B into aculene A by introducing the 5,6-alkene moiety. Asperculanes A, B, C and F, as well as 14-prolyl asperculane C, might be shunt products of the pathway. This chain is Proline iminopeptidase aneH, found in Aspergillus aculeatus (strain ATCC 16872 / CBS 172.66 / WB 5094).